The following is a 556-amino-acid chain: Arginine--tRNA ligase (556 aa).

A 'HIGH' region motif is present at residues alanine 132–histidine 142.

Belongs to the class-I aminoacyl-tRNA synthetase family. Monomer.

It is found in the cytoplasm. It carries out the reaction tRNA(Arg) + L-arginine + ATP = L-arginyl-tRNA(Arg) + AMP + diphosphate. This chain is Arginine--tRNA ligase, found in Bacillus velezensis (strain DSM 23117 / BGSC 10A6 / LMG 26770 / FZB42) (Bacillus amyloliquefaciens subsp. plantarum).